A 249-amino-acid polypeptide reads, in one-letter code: MTRVAVNGVTGQMGGAVIEAATDSEVVVGFATSDTDAVDDVPVVHPAEAAAALREYDVDVVVDFAVPKGALTVAEACVEAGVPMVVGTTGFDEDGLARLQDASEEIPLLKATNFSQGIQVLQRLISEAVGTLDDYDLELMETHHNRKVDAPSGTASSILDVIQEERDVEPVYGREGHAPREDDEIGVFARRAGDVRGEHELVLAGNDEVLSLSHRAEDRGVFAAGALDAATWLVGRDSGWYEFGDVVDA.

NAD(+) contacts are provided by residues 8–13, 87–89, and 111–114; these read GVTGQM, GTT, and ATNF. Residue His143 is the Proton donor/acceptor of the active site. His144 is a (S)-2,3,4,5-tetrahydrodipicolinate binding site. Lys147 (proton donor) is an active-site residue. 153 to 154 contacts (S)-2,3,4,5-tetrahydrodipicolinate; it reads GT.

The protein belongs to the DapB family.

It localises to the cytoplasm. The enzyme catalyses (S)-2,3,4,5-tetrahydrodipicolinate + NAD(+) + H2O = (2S,4S)-4-hydroxy-2,3,4,5-tetrahydrodipicolinate + NADH + H(+). It carries out the reaction (S)-2,3,4,5-tetrahydrodipicolinate + NADP(+) + H2O = (2S,4S)-4-hydroxy-2,3,4,5-tetrahydrodipicolinate + NADPH + H(+). It functions in the pathway amino-acid biosynthesis; L-lysine biosynthesis via DAP pathway; (S)-tetrahydrodipicolinate from L-aspartate: step 4/4. Catalyzes the conversion of 4-hydroxy-tetrahydrodipicolinate (HTPA) to tetrahydrodipicolinate. The sequence is that of 4-hydroxy-tetrahydrodipicolinate reductase from Haloarcula marismortui (strain ATCC 43049 / DSM 3752 / JCM 8966 / VKM B-1809) (Halobacterium marismortui).